The chain runs to 380 residues: Erythronate-4-phosphate dehydrogenase (380 aa).

Residues Ser-45 and Thr-66 each contribute to the substrate site. NAD(+) contacts are provided by residues 126–127, Asp-146, Thr-174, 205–207, and Asp-231; these read QV and ASR. Arg-207 is an active-site residue. Glu-236 is an active-site residue. His-253 serves as the catalytic Proton donor. Gly-256 contacts NAD(+). Tyr-257 is a substrate binding site.

This sequence belongs to the D-isomer specific 2-hydroxyacid dehydrogenase family. PdxB subfamily. Homodimer.

The protein localises to the cytoplasm. It catalyses the reaction 4-phospho-D-erythronate + NAD(+) = (R)-3-hydroxy-2-oxo-4-phosphooxybutanoate + NADH + H(+). It participates in cofactor biosynthesis; pyridoxine 5'-phosphate biosynthesis; pyridoxine 5'-phosphate from D-erythrose 4-phosphate: step 2/5. In terms of biological role, catalyzes the oxidation of erythronate-4-phosphate to 3-hydroxy-2-oxo-4-phosphonooxybutanoate. The sequence is that of Erythronate-4-phosphate dehydrogenase from Azotobacter vinelandii (strain DJ / ATCC BAA-1303).